A 129-amino-acid polypeptide reads, in one-letter code: Small ribosomal subunit protein uS11 (129 aa).

It belongs to the universal ribosomal protein uS11 family. Part of the 30S ribosomal subunit. Interacts with proteins S7 and S18. Binds to IF-3.

In terms of biological role, located on the platform of the 30S subunit, it bridges several disparate RNA helices of the 16S rRNA. Forms part of the Shine-Dalgarno cleft in the 70S ribosome. In Mannheimia succiniciproducens (strain KCTC 0769BP / MBEL55E), this protein is Small ribosomal subunit protein uS11.